Here is a 177-residue protein sequence, read N- to C-terminus: Large ribosomal subunit protein uL6 (177 aa).

Belongs to the universal ribosomal protein uL6 family. Part of the 50S ribosomal subunit.

This protein binds to the 23S rRNA, and is important in its secondary structure. It is located near the subunit interface in the base of the L7/L12 stalk, and near the tRNA binding site of the peptidyltransferase center. In Pectobacterium atrosepticum (strain SCRI 1043 / ATCC BAA-672) (Erwinia carotovora subsp. atroseptica), this protein is Large ribosomal subunit protein uL6.